Here is a 393-residue protein sequence, read N- to C-terminus: Chorismate synthase (393 aa).

NADP(+) is bound by residues Arg40 and Arg46. FMN contacts are provided by residues 129–131, 249–250, Gly301, 316–320, and Arg342; these read RSS, QA, and KPIPT.

Belongs to the chorismate synthase family. Homotetramer. Requires FMNH2 as cofactor.

The catalysed reaction is 5-O-(1-carboxyvinyl)-3-phosphoshikimate = chorismate + phosphate. Its pathway is metabolic intermediate biosynthesis; chorismate biosynthesis; chorismate from D-erythrose 4-phosphate and phosphoenolpyruvate: step 7/7. Catalyzes the anti-1,4-elimination of the C-3 phosphate and the C-6 proR hydrogen from 5-enolpyruvylshikimate-3-phosphate (EPSP) to yield chorismate, which is the branch point compound that serves as the starting substrate for the three terminal pathways of aromatic amino acid biosynthesis. This reaction introduces a second double bond into the aromatic ring system. The protein is Chorismate synthase of Geotalea daltonii (strain DSM 22248 / JCM 15807 / FRC-32) (Geobacter daltonii).